The sequence spans 148 residues: Protein NrdI (148 aa).

This sequence belongs to the NrdI family.

Its function is as follows. Probably involved in ribonucleotide reductase function. This chain is Protein NrdI, found in Corynebacterium glutamicum (strain R).